A 490-amino-acid polypeptide reads, in one-letter code: MSRGMSKCRITNTAPSARGWKATTFGDYAFSSRGSSEPNAMAPAIIEQIKDHPCFSREAHLYFARMHLAVASACNIQCNYCNRKYDCANESRPGVASHRLTPDQALRRAIAVANEVPQLSVVGIAGPGDACYDWRKTKATLIPIAREIPDVKLCISTNGLALPEHVDDLVDMNVGHVTITINMVDPRIGTKIYPWIFYDGRRYNGIDASRILHERQMLGLEMLTERGILAKVNSVMIPGVNDEHLIEVNKWVKDRGAFMHNVMPLISERSHGTFYGLNDQRCPATSELIALRDRLEGGTQVMRHCHQCRADAVGLLGDDRAREFTLGQFPADETYDSAKRNAYRQLIERERRGQTLEESDAATPVSAPSDELLLIAVTTKGGGRVNGHFGHAQEIQIFSVCQKGNGLIGHLKIDPYCLGGWGEEATLNTIIDALKGLDVLICSEIGKSPKNKLARRGVRATGAYDGSYIEQAIGALYRAVLHNEALATAI.

The Radical SAM core domain occupies 60 to 309 (HLYFARMHLA…QVMRHCHQCR (250 aa)). The [4Fe-4S] cluster site is built by C74 and C78. Y80 contributes to the S-adenosyl-L-methionine binding site. Position 81 (C81) interacts with [4Fe-4S] cluster. Residues G128 and T180 each contribute to the S-adenosyl-L-methionine site. C305 and C308 together coordinate [4Fe-4S] cluster.

This sequence belongs to the radical SAM superfamily. NifB family. Requires [4Fe-4S] cluster as cofactor.

It participates in cofactor biosynthesis; Fe-Mo cofactor biosynthesis. Involved in the biosynthesis of the iron-molybdenum cofactor (FeMo-co or M-cluster) found in the dinitrogenase enzyme of the nitrogenase complex in nitrogen-fixing microorganisms. NifB catalyzes the crucial step of radical SAM-dependent carbide insertion that occurs concomitant with the insertion of a 9th sulfur and the rearrangement/coupling of two [4Fe-4S] clusters into a [8Fe-9S-C] cluster, the precursor to the M-cluster. This Rhizobium leguminosarum bv. trifolii protein is FeMo cofactor biosynthesis protein NifB (nifB).